We begin with the raw amino-acid sequence, 103 residues long: Large ribosomal subunit protein bL21 (103 aa).

Belongs to the bacterial ribosomal protein bL21 family. As to quaternary structure, part of the 50S ribosomal subunit. Contacts protein L20.

In terms of biological role, this protein binds to 23S rRNA in the presence of protein L20. This is Large ribosomal subunit protein bL21 from Pseudomonas syringae pv. syringae (strain B728a).